The primary structure comprises 143 residues: MSHDSDDKTFPYQKDDAELRRRLTPMQYEVTQHAATERAFTGEYTDTEDAGIYKCVVCSTPLFESGAKFHSGCGWPSYFKPLNGEVIDEKVDYSHGMVRVEVRCNNCGAHLGHVFEDGPRDKTGLRYCINSAALNFESRPENE.

One can recognise a MsrB domain in the interval 16–139; it reads DAELRRRLTP…NSAALNFESR (124 aa). Cys55, Cys58, Cys104, and Cys107 together coordinate Zn(2+). Catalysis depends on Cys128, which acts as the Nucleophile.

Belongs to the MsrB Met sulfoxide reductase family. Requires Zn(2+) as cofactor.

It catalyses the reaction L-methionyl-[protein] + [thioredoxin]-disulfide + H2O = L-methionyl-(R)-S-oxide-[protein] + [thioredoxin]-dithiol. The chain is Peptide methionine sulfoxide reductase MsrB from Burkholderia cenocepacia (strain HI2424).